The chain runs to 613 residues: Chaperone protein dnaK (613 aa).

The protein belongs to the heat shock protein 70 family.

It localises to the plastid. Its subcellular location is the chloroplast. Functionally, acts as a chaperone. In Phaeodactylum tricornutum (strain CCAP 1055/1), this protein is Chaperone protein dnaK.